Reading from the N-terminus, the 182-residue chain is T-cell surface glycoprotein CD3 gamma chain (182 aa).

An N-terminal signal peptide occupies residues Met1–Ala22. At Gln23 to Ser116 the chain is on the extracellular side. The Ig-like domain occupies Gln37–Ser94. Cys46 and Cys87 are disulfide-bonded. N-linked (GlcNAc...) asparagine glycosylation is found at Asn52 and Asn92. A helical transmembrane segment spans residues Gly117 to Ala137. At Gly138–Asn182 the chain is on the cytoplasmic side. Ser145 is subject to Phosphoserine. Ser148 is subject to Phosphoserine; by PKC. The ITAM domain maps to Asp149–Asn177. A Di-leucine motif motif is present at residues Leu153–Leu154.

In terms of assembly, the TCR-CD3 complex is composed of a CD3D/CD3E and a CD3G/CD3E heterodimers that preferentially associate with TCRalpha and TCRbeta, respectively, to form TCRalpha/CD3E/CD3G and TCRbeta/CD3G/CD3E trimers. In turn, the hexamer interacts with CD3Z homodimer to form the TCR-CD3 complex. Alternatively, TCRalpha and TCRbeta can be replaced by TCRgamma and TCRdelta. In terms of processing, phosphorylated on Tyr residues after T-cell receptor triggering by LCK in association with CD4/CD8. Phosphorylated also by PKC; leading to the TCR complex down-regulation. Post-translationally, phosphorylated on Tyr residues after T-cell receptor triggering by LCK in association with CD4/CD8.

The protein localises to the cell membrane. Part of the TCR-CD3 complex present on T-lymphocyte cell surface that plays an essential role in adaptive immune response. When antigen presenting cells (APCs) activate T-cell receptor (TCR), TCR-mediated signals are transmitted across the cell membrane by the CD3 chains CD3D, CD3E, CD3G and CD3Z. All CD3 chains contain immunoreceptor tyrosine-based activation motifs (ITAMs) in their cytoplasmic domain. Upon TCR engagement, these motifs become phosphorylated by Src family protein tyrosine kinases LCK and FYN, resulting in the activation of downstream signaling pathways. In addition to this role of signal transduction in T-cell activation, CD3G plays an essential role in the dynamic regulation of TCR expression at the cell surface. Indeed, constitutive TCR cycling is dependent on the di-leucine-based (diL) receptor-sorting motif present in CD3G. The sequence is that of T-cell surface glycoprotein CD3 gamma chain (CD3G) from Homo sapiens (Human).